Consider the following 272-residue polypeptide: 2-dehydro-3-deoxyphosphooctonate aldolase (272 aa).

The protein belongs to the KdsA family.

The protein localises to the cytoplasm. The catalysed reaction is D-arabinose 5-phosphate + phosphoenolpyruvate + H2O = 3-deoxy-alpha-D-manno-2-octulosonate-8-phosphate + phosphate. The protein operates within carbohydrate biosynthesis; 3-deoxy-D-manno-octulosonate biosynthesis; 3-deoxy-D-manno-octulosonate from D-ribulose 5-phosphate: step 2/3. It participates in bacterial outer membrane biogenesis; lipopolysaccharide biosynthesis. The polypeptide is 2-dehydro-3-deoxyphosphooctonate aldolase (Geotalea uraniireducens (strain Rf4) (Geobacter uraniireducens)).